We begin with the raw amino-acid sequence, 184 residues long: Large ribosomal subunit protein uL5 (184 aa).

Belongs to the universal ribosomal protein uL5 family. In terms of assembly, part of the 50S ribosomal subunit; part of the 5S rRNA/L5/L18/L25 subcomplex. Contacts the 5S rRNA and the P site tRNA. Forms a bridge to the 30S subunit in the 70S ribosome.

This is one of the proteins that bind and probably mediate the attachment of the 5S RNA into the large ribosomal subunit, where it forms part of the central protuberance. In the 70S ribosome it contacts protein S13 of the 30S subunit (bridge B1b), connecting the 2 subunits; this bridge is implicated in subunit movement. Contacts the P site tRNA; the 5S rRNA and some of its associated proteins might help stabilize positioning of ribosome-bound tRNAs. The protein is Large ribosomal subunit protein uL5 of Thermotoga maritima (strain ATCC 43589 / DSM 3109 / JCM 10099 / NBRC 100826 / MSB8).